The primary structure comprises 928 residues: Protein ARABIDILLO 2 (928 aa).

A Nuclear localization signal motif is present at residues 3-8 (RRVRQR). The F-box domain occupies 37-83 (YVNWTSLPYDTVFHLFTRLNYRDRASLASTCRTWRSLGASSFLWSSL). ARM repeat units lie at residues 147-186 (AARH…KLRV), 237-278 (TSNI…KSSQ), 303-341 (KGKV…DLIR), 370-409 (SQGL…TFIV), 419-458 (CGRA…NLSV), 460-499 (AKVA…NLSV), 501-543 (EEHK…NLAA), 545-585 (DKCS…NLAA), 591-630 (GNNA…NLAF), 632-674 (DKNR…GLSV), 676-715 (EANS…NLSF), 717-757 (PGNA…YMFD), and 824-864 (IPEA…QFTI).

Belongs to the beta-catenin family. In terms of tissue distribution, expressed ubiquitously.

The protein localises to the nucleus. Its function is as follows. Promotes lateral root initiation and development, independently of auxin (IAA) and abscisis acid (ABA). The protein is Protein ARABIDILLO 2 of Arabidopsis thaliana (Mouse-ear cress).